The chain runs to 504 residues: uncharacterized protein (504 aa).

A run of 3 helical transmembrane segments spans residues 146–166 (TSAGYAKIVGCALGFPVINIA), 196–216 (SSAAILITGAGAIGTALADVL), and 330–350 (SMALTMALLAAAVLYASVAVA). 372–492 (FLNIDVPLQA…EIAYGVARTR (121 aa)) contacts a nucleoside 3',5'-cyclic phosphate.

Its subcellular location is the cell membrane. This is an uncharacterized protein from Mycobacterium tuberculosis (strain CDC 1551 / Oshkosh).